A 176-amino-acid polypeptide reads, in one-letter code: Protein GrpE (176 aa).

Belongs to the GrpE family. As to quaternary structure, homodimer.

Its subcellular location is the cytoplasm. Participates actively in the response to hyperosmotic and heat shock by preventing the aggregation of stress-denatured proteins, in association with DnaK and GrpE. It is the nucleotide exchange factor for DnaK and may function as a thermosensor. Unfolded proteins bind initially to DnaJ; upon interaction with the DnaJ-bound protein, DnaK hydrolyzes its bound ATP, resulting in the formation of a stable complex. GrpE releases ADP from DnaK; ATP binding to DnaK triggers the release of the substrate protein, thus completing the reaction cycle. Several rounds of ATP-dependent interactions between DnaJ, DnaK and GrpE are required for fully efficient folding. This Thermoplasma volcanium (strain ATCC 51530 / DSM 4299 / JCM 9571 / NBRC 15438 / GSS1) protein is Protein GrpE.